The primary structure comprises 397 residues: Cathepsin E (397 aa).

The first 16 residues, 1–16 (MKQFLVVLLILSFVHG), serve as a signal peptide directing secretion. A propeptide spans 17 to 49 (IIRVPLKRQKSMRKILKEKGKLSHLWTKQGNEF) (activation peptide). Residues 74 to 385 (YFGQISIGTP…DRGNNRVGFA (312 aa)) form the Peptidase A1 domain. Asp92 is an active-site residue. An intrachain disulfide couples Cys105 to Cys110. Asn139 carries an N-linked (GlcNAc...) asparagine glycan. Cys268 and Cys272 are joined by a disulfide. Asp277 is an active-site residue. A disulfide bridge links Cys310 with Cys344.

The protein belongs to the peptidase A1 family. In terms of assembly, homodimer; disulfide-linked. Glycosylated. Contains high mannose-type oligosaccharide. Found in the larval foregut and adult stomach.

The protein localises to the endosome. It catalyses the reaction Similar to cathepsin D, but slightly broader specificity.. May have a role in immune function. Probably involved in the processing of antigenic peptides during MHC class II-mediated antigen presentation. In Aquarana catesbeiana (American bullfrog), this protein is Cathepsin E (CTSE).